We begin with the raw amino-acid sequence, 334 residues long: Glycerol-3-phosphate dehydrogenase [NAD(P)+] (334 aa).

NADPH-binding residues include Trp14, Arg34, and Lys107. Sn-glycerol 3-phosphate contacts are provided by Lys107 and Gly135. Ala139 provides a ligand contact to NADPH. Sn-glycerol 3-phosphate is bound by residues Lys190, Asp243, Ser253, Arg254, and Asn255. Lys190 serves as the catalytic Proton acceptor. Arg254 is an NADPH binding site. Residues Val272 and Glu273 each contribute to the NADPH site.

This sequence belongs to the NAD-dependent glycerol-3-phosphate dehydrogenase family.

It is found in the cytoplasm. It carries out the reaction sn-glycerol 3-phosphate + NAD(+) = dihydroxyacetone phosphate + NADH + H(+). The enzyme catalyses sn-glycerol 3-phosphate + NADP(+) = dihydroxyacetone phosphate + NADPH + H(+). The protein operates within membrane lipid metabolism; glycerophospholipid metabolism. In terms of biological role, catalyzes the reduction of the glycolytic intermediate dihydroxyacetone phosphate (DHAP) to sn-glycerol 3-phosphate (G3P), the key precursor for phospholipid synthesis. This Neorickettsia sennetsu (strain ATCC VR-367 / Miyayama) (Ehrlichia sennetsu) protein is Glycerol-3-phosphate dehydrogenase [NAD(P)+].